The chain runs to 177 residues: Large ribosomal subunit protein uL6 (177 aa).

Belongs to the universal ribosomal protein uL6 family. In terms of assembly, part of the 50S ribosomal subunit.

This protein binds to the 23S rRNA, and is important in its secondary structure. It is located near the subunit interface in the base of the L7/L12 stalk, and near the tRNA binding site of the peptidyltransferase center. In Bradyrhizobium diazoefficiens (strain JCM 10833 / BCRC 13528 / IAM 13628 / NBRC 14792 / USDA 110), this protein is Large ribosomal subunit protein uL6.